The sequence spans 1579 residues: Eukaryotic translation initiation factor 4 gamma 3 (1579 aa).

Disordered regions lie at residues 1-35 (MNSQ…RPGV) and 128-326 (TQQQ…GPSL). The segment covering 10–25 (PFFQRPQIQPPRAAIP) has biased composition (low complexity). Over residues 26-35 (NSSPSIRPGV) the composition is skewed to polar residues. Residues 134–162 (PAKREKKTIRIRDPNQGGKDITEEIMSGG) are PABPC1-binding. A compositionally biased stretch (pro residues) spans 167 to 183 (PTPPIGRPASTPTPPQQ). Thr-168 bears the Phosphothreonine mark. A phosphoserine mark is found at Ser-230, Ser-232, and Ser-267. Residues 266-292 (SSPTSLPPLARSSLPSPMSAALSSQPL) are compositionally biased toward low complexity. Basic and acidic residues predominate over residues 295–308 (AEDKCELPSSKEED). Residues 315 to 326 (PTSCTAASGPSL) show a composition bias toward polar residues. Phosphoserine occurs at positions 436, 470, 472, and 490. Basic and acidic residues predominate over residues 454 to 470 (RTCLSKDAKEMQDKAES). Disordered stretches follow at residues 454–615 (RTCL…DTEG), 681–706 (RQTP…QRRE), and 724–744 (AENA…PESI). A compositionally biased stretch (acidic residues) spans 471–480 (ESDGQAEETA). A compositionally biased stretch (polar residues) spans 481 to 501 (DPQSLHSGRSPAPVQTATTAP). 2 stretches are compositionally biased toward basic and acidic residues: residues 506–515 (KTKEQTRTPD) and 549–563 (SERD…KAEE). Positions 589 to 598 (SGSADSSADG) are enriched in low complexity. Positions 606 to 615 (ESWKPADTEG) are enriched in basic and acidic residues. The segment at 614 to 625 (EGKKQYDREFLL) is EIF4E-binding. The segment at 694-1014 (VGPRRSQPGQ…EQRKVQQLMT (321 aa)) is eIF3/EIF4A-binding. HEAT repeat units lie at residues 740–778 (DPES…LTVD), 779–826 (TEER…GNTV), 827–900 (NFRK…LKML), 901–939 (TEAI…DFEK), and 940–979 (AKPR…LCNW). The MIF4G domain occupies 750–978 (FRKVRSILNK…QDVIDLRLCN (229 aa)). A compositionally biased stretch (basic and acidic residues) spans 855–871 (KELEAASAPEERTRLHD). The interval 855–875 (KELEAASAPEERTRLHDELEE) is disordered. Residues 989-1018 (KTIEQIHKEAKIEEQEEQRKVQQLMTKEKR) adopt a coiled-coil conformation. 2 disordered regions span residues 1009 to 1037 (VQQL…QGAK) and 1067 to 1214 (LGSW…LSEE). Over residues 1086 to 1098 (LRSSASSLNRFSP) the composition is skewed to low complexity. At Ser-1150 the chain carries Phosphoserine; by CaMK1. Basic and acidic residues-rich tracts occupy residues 1150-1169 (SSKD…EMLE) and 1179-1197 (DAER…ELAK). The stretch at 1154-1176 (LLDNQSQEEQRREMLETVKQLTG) forms a coiled coil. Phosphoserine is present on Ser-1212. One can recognise an MI domain in the interval 1215–1337 (EVERKSKSII…SMRELIVEFS (123 aa)). Residues 1406-1438 (SSEALSKKELSAEELSQRLEKLIMEEKADDERI) adopt a coiled-coil conformation. In terms of domain architecture, W2 spans 1410 to 1579 (LSKKELSAEE…REAEEESEDN (170 aa)). Positions 1427-1579 (LIMEEKADDE…REAEEESEDN (153 aa)) are EIF4A-binding. Residues 1565–1579 (FFTWLREAEEESEDN) form a necessary but not sufficient for MKNK1-binding region.

The protein belongs to the eukaryotic initiation factor 4G family. In terms of assembly, interacts with EIF4A, EIF4E, eIF3 and PABPC1. Part of a complex with EIF4E. eIF4F is a multi-subunit complex, the composition of which varies with external and internal environmental conditions. It is composed of at least EIF4A, EIF4E and EIF4G1/EIF4G3. EIF4G1/EIF4G3 interacts through its C-terminus with the serine/threonine kinases MKNK1, and with MKNK2. Appears to act as a scaffold protein, holding these enzymes in place to phosphorylate eIF4E. Non-phosphorylated EIF4EBP1 competes with EIF4G1/EIFG3 to interact with EIF4E; insulin stimulated MAP-kinase (MAPK1 and MAPK3) phosphorylation of EIF4EBP1 causes dissociation of the complex allowing EIF4G1/EIF4G3 to bind and consequent initiation of translation. EIF4G1/EIF4G3 interacts with PABPC1 to bring about circularization of the mRNA. Interacts with FXR1; promoting translation of FXR1 target mRNAs.

Component of the protein complex eIF4F, which is involved in the recognition of the mRNA cap, ATP-dependent unwinding of 5'-terminal secondary structure and recruitment of mRNA to the ribosome. Functional homolog of EIF4G1. This Mus musculus (Mouse) protein is Eukaryotic translation initiation factor 4 gamma 3 (Eif4g3).